Here is a 337-residue protein sequence, read N- to C-terminus: Inositol 2-dehydrogenase (337 aa).

This sequence belongs to the Gfo/Idh/MocA family. As to quaternary structure, homotetramer.

It carries out the reaction myo-inositol + NAD(+) = scyllo-inosose + NADH + H(+). Functionally, involved in the oxidation of myo-inositol (MI) to 2-keto-myo-inositol (2KMI or 2-inosose). This is Inositol 2-dehydrogenase from Klebsiella pneumoniae subsp. pneumoniae (strain ATCC 700721 / MGH 78578).